The sequence spans 334 residues: uncharacterized protein (334 aa).

The active-site Proton donor is the Tyr-52. The disordered stretch occupies residues 314–334 (LPPPASPNSEPQVTGGCSSMC). Over residues 320–334 (PNSEPQVTGGCSSMC) the composition is skewed to polar residues.

This sequence belongs to the aldo/keto reductase family.

It localises to the cytoplasm. Its subcellular location is the nucleus. This is an uncharacterized protein from Schizosaccharomyces pombe (strain 972 / ATCC 24843) (Fission yeast).